A 534-amino-acid chain; its full sequence is Tyrosine-protein kinase Fyn (534 aa).

Residue glycine 2 is the site of N-myristoyl glycine attachment. 2 S-palmitoyl cysteine lipidation sites follow: cysteine 3 and cysteine 6. A Phosphothreonine; by PKC modification is found at threonine 12. A disordered region spans residues 15–39 (TDERDGSLTQSSGYRYGTDPTPQHY). The 62-residue stretch at 82-143 (TGVTLFEALY…PSNYVAPVDS (62 aa)) folds into the SH3 domain. Residues 149-246 (WYFGKLGRKD…GLCFNLTVIA (98 aa)) form the SH2 domain. Positions 268–521 (LFLEQKLGQG…YLQGFLEDYF (254 aa)) constitute a Protein kinase domain. ATP-binding positions include 274–282 (LGQGCFAEV) and lysine 296. Aspartate 387 serves as the catalytic Proton acceptor. Tyrosine 417 is modified (phosphotyrosine; by autocatalysis). The residue at position 528 (tyrosine 528) is a Phosphotyrosine.

It belongs to the protein kinase superfamily. Tyr protein kinase family. SRC subfamily. In terms of assembly, associates through its SH3 domain, to the p85 subunit of phosphatidylinositol 3-kinase. It depends on Mn(2+) as a cofactor. Thymus and spleen.

The protein localises to the cytoplasm. It localises to the nucleus. It is found in the cell membrane. Its subcellular location is the perikaryon. The enzyme catalyses L-tyrosyl-[protein] + ATP = O-phospho-L-tyrosyl-[protein] + ADP + H(+). Its activity is regulated as follows. Inhibited by phosphorylation of Tyr-528 by leukocyte common antigen and activated by dephosphorylation of this site. Functionally, tyrosine-protein kinase implicated in the control of cell growth. Plays a role in the regulation of intracellular calcium levels. Required in brain development and mature brain function with important roles in the regulation of axon growth, axon guidance, and neurite extension. Role in CNTN1-mediated signaling. This is Tyrosine-protein kinase Fyn (FYN) from Gallus gallus (Chicken).